The sequence spans 168 residues: Acetolactate synthase small subunit (168 aa).

An ACT domain is found at 7-82; that stretch reads TLSVLVEDKP…VIKIVEQDDE (76 aa).

Belongs to the acetolactate synthase small subunit family. In terms of assembly, dimer of large and small chains.

It carries out the reaction 2 pyruvate + H(+) = (2S)-2-acetolactate + CO2. It participates in amino-acid biosynthesis; L-isoleucine biosynthesis; L-isoleucine from 2-oxobutanoate: step 1/4. It functions in the pathway amino-acid biosynthesis; L-valine biosynthesis; L-valine from pyruvate: step 1/4. The sequence is that of Acetolactate synthase small subunit (ilvH) from Mycobacterium bovis (strain ATCC BAA-935 / AF2122/97).